Consider the following 639-residue polypeptide: Mediator of RNA polymerase II transcription subunit 17 (639 aa).

Residues 32–43 (ASATVTTNGTTA) are compositionally biased toward polar residues. Disordered stretches follow at residues 32 to 68 (ASAT…EEHS) and 130 to 159 (MGDA…NNDS). The span at 48 to 57 (DSGSQQSVSS) shows a compositional bias: low complexity. Over residues 58 to 68 (APIQQNSEEHS) the composition is skewed to polar residues. The stretch at 245–271 (WKLRSLEDSKALLKENYAKLQKSLEVE) forms a coiled coil.

This sequence belongs to the Mediator complex subunit 17 family. In terms of assembly, component of the Mediator complex.

It localises to the nucleus. Functionally, component of the Mediator complex, a coactivator involved in the regulated transcription of nearly all RNA polymerase II-dependent genes. Mediator functions as a bridge to convey information from gene-specific regulatory proteins to the basal RNA polymerase II transcription machinery. Mediator is recruited to promoters by direct interactions with regulatory proteins and serves as a scaffold for the assembly of a functional preinitiation complex with RNA polymerase II and the general transcription factors. This is Mediator of RNA polymerase II transcription subunit 17 (SRB4) from Eremothecium gossypii (strain ATCC 10895 / CBS 109.51 / FGSC 9923 / NRRL Y-1056) (Yeast).